Here is a 623-residue protein sequence, read N- to C-terminus: Membralin-like protein At1g60995 (623 aa).

Residues 24–44 (GFLEYTYLFVAITLFCILVVM) traverse the membrane as a helical segment. Positions 99 to 119 (SLEVSKTDQESSTSEENTDDT) are disordered. The next 4 membrane-spanning stretches (helical) occupy residues 315–335 (GVLMMSLFVFFTTTMSVSFTL), 363–383 (IFVHVIESLVFVPIMIGILFF), 392–412 (LLAFMVLVLVWLCELFTLISV), and 424–444 (FFLLYFLVFHIYFFSYAYGFS). Disordered stretches follow at residues 506-567 (NRTT…QAGA) and 602-623 (EAQVFADTSPPQNPHHDPLSVD). Residues 514–531 (PSGPNHTTPNQNTETRSF) show a composition bias toward polar residues.

This sequence belongs to the membralin family.

It is found in the membrane. The protein is Membralin-like protein At1g60995 of Arabidopsis thaliana (Mouse-ear cress).